Consider the following 560-residue polypeptide: Glucose-6-phosphate isomerase, cytosolic (560 aa).

Ala2 carries the post-translational modification N-acetylalanine. The Proton donor role is filled by Glu361. Residues His392 and Lys517 contribute to the active site.

The protein belongs to the GPI family. Homodimer.

It localises to the cytoplasm. It carries out the reaction alpha-D-glucose 6-phosphate = beta-D-fructose 6-phosphate. Its pathway is carbohydrate degradation; glycolysis; D-glyceraldehyde 3-phosphate and glycerone phosphate from D-glucose: step 2/4. With respect to regulation, inhibited by glycerol-3-P (G3P). In Arabidopsis thaliana (Mouse-ear cress), this protein is Glucose-6-phosphate isomerase, cytosolic (PGIC).